The chain runs to 395 residues: Flagellin A (395 aa).

This sequence belongs to the bacterial flagellin family.

It is found in the secreted. The protein resides in the bacterial flagellum. Functionally, flagellin is the subunit protein which polymerizes to form the filaments of bacterial flagella. Homomer of FlaA is able to form a functional filament. This chain is Flagellin A (flaA), found in Rhizobium meliloti (Ensifer meliloti).